We begin with the raw amino-acid sequence, 611 residues long: MILQLLFYSLFTHLAVSQIDVNQALNQNKLNIDTISSSAISDAELEKTFPRTNLSRMRNALKSLRQNWSAKLQAMPARNYQNAGTNQENGATEQQKPLREKPRDRVKMEGDTLHQVNKAAGLNDILYQGDMVLTDDQIATILEARDETTVSTASRARRQAYRDRYYPSTTWGSSVYYYYDRTATPKIVKAFEQAVAFWQNVTCINIMQSSTAINRIRVFKGQGCYSYVGRISGVQDLSLGTGCEEFGTAAHELGHALGFFHTQSRYDRDNYISINYANIDPSYVEQFDKETSNTNFNYGMPYDYGSIMQYGATSASSNDKATMIARDTEYQDTMGSDFVGFYDISMMNEHYKCKELCPAASSAQCKNGGFPSPRNCAICICPSGYGGILCDQRPPGCGDSVTATTTWQTLTNTIGDGLPTLRDNHTMCNYWVKAPDNQAVEIRISGLTTVTIDGCIFGGVEIKTHKDQKLTGYRYCSSADQNTVHRSTGSLVPIILFNRYASTKAVLEYRAVTPSVDVSATYTTFAPIVNSCQDLHPNCDFYKFFGMCRSKKIRSNCKFTCHDCNNNNASPFGSNFFNNNYNSFNNWYTNKNKNYYPYSNSNNNKPWMWFF.

A signal peptide spans M1–S17. The propeptide occupies Q18 to R158. N-linked (GlcNAc...) asparagine glycans are attached at residues N53 and N67. The segment covering N82 to Q95 has biased composition (polar residues). The segment at N82–R103 is disordered. In terms of domain architecture, Peptidase M12A spans Q159–K354. The N-linked (GlcNAc...) asparagine glycan is linked to N200. Intrachain disulfides connect C203–C353, C224–C243, C357–C376, C379–C390, C397–C428, C455–C476, C532–C564, C539–C557, and C548–C561. Position 251 (H251) interacts with Zn(2+). E252 is a catalytic residue. 2 residues coordinate Zn(2+): H255 and H261. One can recognise an EGF-like domain in the interval G340 to G396. The CUB domain maps to C397 to V516. Residue N424 is glycosylated (N-linked (GlcNAc...) asparagine). Positions C532–C564 constitute a ShKT domain.

Zn(2+) serves as cofactor. As to expression, expressed in excretory cell and in amphid and phasmid sheath glia.

It is found in the secreted. Metalloprotease. The chain is Zinc metalloproteinase nas-31 (nas-31) from Caenorhabditis elegans.